The chain runs to 586 residues: Solute carrier family 13 member 2 (586 aa).

3 helical membrane passes run Ser13 to Thr33, Ala53 to Met73, and Thr86 to His106. The span at Asp165 to Phe175 shows a compositional bias: polar residues. The interval Asp165 to His209 is disordered. 9 helical membrane-spanning segments follow: residues Gly215–Thr235, Phe264–Phe284, Pro319–Phe339, Gly366–Leu386, Thr407–Ala427, Pro445–Phe465, Phe478–Leu498, Leu506–Leu526, and Gly535–Ile555.

It belongs to the SLC13A/DASS transporter (TC 2.A.47) family. NADC subfamily. In terms of tissue distribution, highly expressed in kidney and small intestine. Not detectable in brain, heart, stomach and skeletal muscle.

It is found in the apical cell membrane. It carries out the reaction succinate(out) + 3 Na(+)(out) = succinate(in) + 3 Na(+)(in). The catalysed reaction is fumarate(out) + 3 Na(+)(out) = fumarate(in) + 3 Na(+)(in). It catalyses the reaction 2-oxoglutarate(out) + 3 Na(+)(out) = 2-oxoglutarate(in) + 3 Na(+)(in). With respect to regulation, li(+) decreases succinate transport in the presence of Na(+), by competing at one of the three cation binding sites. Its function is as follows. Low-affinity sodium-dicarboxylate cotransporter, that mediates the entry of citric acid cycle intermediates, such as succinate, citrate, fumarate and alpha-ketoglutarate (2-oxoglutarate) into the small intestine and renal proximal tubule. Can transport citrate in a Na(+)-dependent manner, recognizing the divalent form of citrate rather than the trivalent form which is normally found in blood. Transports the dicarboxylate into the cell with a probable stoichiometry of 3 Na(+) for 1 divalent dicarboxylate, rendering the process electrogenic. Has a critical role in renal dicarboxylate transport. The chain is Solute carrier family 13 member 2 (Slc13a2) from Mus musculus (Mouse).